A 539-amino-acid chain; its full sequence is Monocarboxylate transporter 8 (539 aa).

The tract at residues 1 to 92 (MALQSQASEE…VETRGTARGF (92 aa)) is disordered. Ala-2 bears the N-acetylalanine mark. The Cytoplasmic segment spans residues 2 to 96 (ALQSQASEEA…GTARGFQPPE (95 aa)). Residues 31-41 (PESEPEPEPEP) are compositionally biased toward acidic residues. Positions 42-64 (EPVPVPPPEPQPEPQPLPDPAPL) are enriched in pro residues. The helical transmembrane segment at 97-117 (GGFGWVVVFAATWCNGSIFGI) threads the bilayer. Residues 118-143 (HNSVGILYSMLLEEEKEKNRQVEFQA) are Extracellular-facing. Residues 144 to 164 (AWVGALAMGMIFFCSPIVSIF) traverse the membrane as a helical segment. Topologically, residues 165 to 171 (TDRLGCR) are cytoplasmic. A helical membrane pass occupies residues 172-192 (ITATAGAAVAFIGLHTSSFTS). Over 193-200 (SLSLRYFT) the chain is Extracellular. The chain crosses the membrane as a helical span at residues 201 to 221 (YGILFGCGCSFAFQPSLVILG). The Cytoplasmic portion of the chain corresponds to 222-229 (HYFQRRLG). Residues 230–250 (LANGVVSAGSSIFSMSFPFLI) form a helical membrane-spanning segment. Topologically, residues 251 to 258 (RMLGDKIK) are extracellular. A helical membrane pass occupies residues 259 to 279 (LAQTFQVLSTFMFVLMLLSLT). Residues 280 to 322 (YRPLLPSSQDTPSKRGVRTLHQRFLAQLRKYFNMRVFRQRTYR) lie on the Cytoplasmic side of the membrane. The chain crosses the membrane as a helical span at residues 323–343 (IWAFGIAAAALGYFVPYVHLM). Topologically, residues 344 to 356 (KYVEEEFSEIKET) are extracellular. The chain crosses the membrane as a helical span at residues 357-377 (WVLLVCIGATSGLGRLVSGHI). Over 378–386 (SDSIPGLKK) the chain is Cytoplasmic. A helical membrane pass occupies residues 387–407 (IYLQVLSFLLLGLMSMMIPLC). The Extracellular portion of the chain corresponds to 408–409 (RD). The chain crosses the membrane as a helical span at residues 410-430 (FGGLIVVCLFLGLCDGFFITI). The Cytoplasmic segment spans residues 431–447 (MAPIAFELVGPMQASQA). A helical transmembrane segment spans residues 448-468 (IGYLLGMMALPMIAGPPIAGL). The Extracellular segment spans residues 469 to 477 (LRNCFGDYH). The chain crosses the membrane as a helical span at residues 478 to 498 (VAFYFAGVPPIIGAVILFFVP). Topologically, residues 499–539 (LMHQRMFKKEQRDSSKDKMLAPDPDPNGELLPGSPNPEEPI) are cytoplasmic. The span at 508–518 (EQRDSSKDKML) shows a compositional bias: basic and acidic residues. A disordered region spans residues 508–539 (EQRDSSKDKMLAPDPDPNGELLPGSPNPEEPI).

The protein belongs to the major facilitator superfamily. Monocarboxylate porter (TC 2.A.1.13) family. Monomer. Homodimer. Homooligomer. In terms of tissue distribution, highly expressed in liver and heart. In adult brain tissue expression is largely confined to endothelial cells of the blood-brain barrier (at protein level).

The protein localises to the cell membrane. It is found in the apical cell membrane. The catalysed reaction is 3,3',5-triiodo-L-thyronine(out) = 3,3',5-triiodo-L-thyronine(in). It catalyses the reaction L-thyroxine(out) = L-thyroxine(in). The enzyme catalyses 3,3',5'-triiodo-L-thyronine(out) = 3,3',5'-triiodo-L-thyronine(in). It carries out the reaction 3,3'-diiodo-L-thyronine(out) = 3,3'-diiodo-L-thyronine(in). Functionally, specific thyroid hormone transmembrane transporter, that mediates both uptake and efflux of thyroid hormones across the cell membrane independently of pH or a Na(+) gradient. Major substrates are the iodothyronines T3 and T4 and to a lesser extent rT3 and 3,3-diiodothyronine (3,3'-T2). Acts as an important mediator of thyroid hormone transport, especially T3, through the blood-brain barrier. The protein is Monocarboxylate transporter 8 (SLC16A2) of Homo sapiens (Human).